Reading from the N-terminus, the 479-residue chain is Ribosomal RNA small subunit methyltransferase F (479 aa).

S-adenosyl-L-methionine-binding positions include 125-131 (AAAPGSK), Glu149, Asp176, and Asp194. The active-site Nucleophile is the Cys247.

Belongs to the class I-like SAM-binding methyltransferase superfamily. RsmB/NOP family.

The protein resides in the cytoplasm. It carries out the reaction cytidine(1407) in 16S rRNA + S-adenosyl-L-methionine = 5-methylcytidine(1407) in 16S rRNA + S-adenosyl-L-homocysteine + H(+). Specifically methylates the cytosine at position 1407 (m5C1407) of 16S rRNA. In Escherichia coli O81 (strain ED1a), this protein is Ribosomal RNA small subunit methyltransferase F.